The following is a 161-amino-acid chain: uncharacterized protein (161 aa).

It belongs to the M.jannaschii MJ0150/MJ0739/MJ0745/MJ1460/MJ1642 family.

This is an uncharacterized protein from Methanocaldococcus jannaschii (strain ATCC 43067 / DSM 2661 / JAL-1 / JCM 10045 / NBRC 100440) (Methanococcus jannaschii).